A 929-amino-acid chain; its full sequence is Patatin-like phospholipase domain-containing protein CNE02340 (929 aa).

The disordered stretch occupies residues 37–85; that stretch reads QPLDGDSSPLSPRSFSLPPESPQLSTASVKAPPPTWKYGPDNGTLRSGR. Over residues 43 to 54 the composition is skewed to low complexity; the sequence is SSPLSPRSFSLP. The helical transmembrane segment at 126–146 threads the bilayer; sequence WPLLFFIFFIIYLEFSAYVIT. In terms of domain architecture, PNPLA spans 301-493; that stretch reads LCLSGGASFG…REDIPLGSLH (193 aa). The short motif at 332 to 336 is the GXSXG element; that stretch reads GTSAG. Ser-334 functions as the Nucleophile in the catalytic mechanism. Asp-480 acts as the Proton acceptor in catalysis. Disordered stretches follow at residues 644–765, 778–806, and 818–929; these read ALSH…NFGD, LSSP…QRFR, and VSES…QDGA. Polar residues-rich tracts occupy residues 652–664 and 745–764; these read NDPA…TNPE and PTHS…SNFG. Residues 779–806 show a composition bias toward low complexity; sequence SSPFRSIRSNTSSSSNNVQSPSSSQRFR. A compositionally biased stretch (basic and acidic residues) spans 856–878; that stretch reads VESHSDRSEDEMLHSGANVKEEY.

Belongs to the PLPL family.

The protein resides in the membrane. In terms of biological role, probable lipid hydrolase. The sequence is that of Patatin-like phospholipase domain-containing protein CNE02340 from Cryptococcus neoformans var. neoformans serotype D (strain JEC21 / ATCC MYA-565) (Filobasidiella neoformans).